The following is a 726-amino-acid chain: MSTSDDIHNTTATGKCPFHQGGHDQSAGAGTTTRDWWPNQLRVDLLNQHSNRSNPLGEDFDYRKEFSKLDYYGLKKDLKALLTESQPWWPADWGSYAGLFIRMAWHGAGTYRSIDGRGGAGRGQQRFAPLNSWPDNVSLDKARRLLWPIKQKYGQKISWADLFILAGNVALENSGFRTFGFGAGREDVWEPDLDVNWGDEKAWLTHRHPEALAKAPLGATEMGLIYVNPEGPDHSGEPLSAAAAIRATFGNMGMNDEETVALIAGGHTLGKTHGAGPTSNVGPDPEAAPIEEQGLGWASTYGSGVGADAITSGLEVVWTQTPTQWSNYFFENLFKYEWVQTRSPAGAIQFEAVDAPEIIPDPFDPSKKRKPTMLVTDLTLRFDPEFEKISRRFLNDPQAFNEAFARAWFKLTHRDMGPKSRYIGPEVPKEDLIWQDPLPQPIYNPTEQDIIDLKFAIADSGLSVSERVSVAWASASTFRGGDKRGGANGARLALMPQRDWDVNAAAVRALPVLEKIQKESGKASLADIIVLAGVVGVEKAASAAGLSIHVPFAPGRVDARQDQTDIEMFELLEPIADGFRNYRARLDVSTTESLLIDKAQQLTLTAPEMTALVGGMRVLGANFDGSKNGVFTDRVGVLSNDFFVNLLDMRYEWKATDESKELFEGRDRETGEVKYTASRADLVFGSNSVLRAVAEVYASSDAHEKFVKDFVAAWVKVMNLDRFDLL.

A disordered region spans residues 1 to 33 (MSTSDDIHNTTATGKCPFHQGGHDQSAGAGTTT). The segment at residues 105 to 226 (WHGAGTYRSI…LGATEMGLIY (122 aa)) is a cross-link (tryptophyl-tyrosyl-methioninium (Trp-Tyr) (with M-252)). The Proton acceptor role is filled by H106. Positions 226 to 252 (YVNPEGPDHSGEPLSAAAAIRATFGNM) form a cross-link, tryptophyl-tyrosyl-methioninium (Tyr-Met) (with W-105). H267 is a binding site for heme b.

The protein belongs to the peroxidase family. Peroxidase/catalase subfamily. In terms of assembly, homodimer or homotetramer. It depends on heme b as a cofactor. Formation of the three residue Trp-Tyr-Met cross-link is important for the catalase, but not the peroxidase activity of the enzyme.

It catalyses the reaction H2O2 + AH2 = A + 2 H2O. The catalysed reaction is 2 H2O2 = O2 + 2 H2O. Functionally, bifunctional enzyme with both catalase and broad-spectrum peroxidase activity. The chain is Catalase-peroxidase from Shigella sonnei (strain Ss046).